The following is a 369-amino-acid chain: MAPTKDFSTATNGADSWDDVADFVTKKGHGVKGLSERGIKTLPKPFHQPLEERFSEKKILERASIPLIDMSEWDSPEVVKSICDAAENWGFFQIVNHGVPLETLERVKEATHRFFGLPAEEKNKYSKENSPINNVRFGSSFVPHVEKALEWKDFLSMFYVSXEETNTYWPPICXDQMLEYMRSSEVLIKRLMEVLVVKGLKVKQIDEIREPMLVGSRRVNLNYYPKCPNRELTLGVGRHSDISTFTILLQDQIEVLHVRKLDDTGNTWVHVTPIAGSLIINIGDALQIMSNGRYKSIEHMVVANGTQDRISVPLFVNPKPQAILCPFPEVLANGEKPLYKPVFCSDYSRHFYTKPHDGKKTVDFALINY.

The Fe2OG dioxygenase domain maps to 215–318 (GSRRVNLNYY…RISVPLFVNP (104 aa)). Residue tyrosine 224 coordinates 2-oxoglutarate. Histidine 239, aspartate 241, and histidine 299 together coordinate Fe cation. The 2-oxoglutarate site is built by arginine 309 and serine 311.

Belongs to the iron/ascorbate-dependent oxidoreductase family. L-ascorbate serves as cofactor. The cofactor is Fe(2+).

The enzyme catalyses (E)-4-coumaroyl-CoA + 2-oxoglutarate + O2 = (E)-2,4-dihydroxycinnamoyl-CoA + succinate + CO2. The catalysed reaction is (E)-feruloyl-CoA + 2-oxoglutarate + O2 = (E)-6-hydroxyferuloyl-CoA + succinate + CO2. The protein operates within phenylpropanoid metabolism. Functionally, 2-oxoglutarate (OG)- and Fe(II)-dependent dioxygenase (2OGD) involved in scopoletin and umbelliferone biosynthesis. Converts feruloyl CoA into 6'-hydroxyferuloyl CoA, and p-coumaroyl CoA into 2,4-dihydroxycinnamoyl-CoA. This is Bi-functional coumaroyl CoA and feruloyl CoA ortho-hydroxylase Diox2 from Ruta graveolens (Common rue).